The following is a 486-amino-acid chain: Siroheme synthase (486 aa).

Positions 1–204 (MNYLPIFVDL…HQIEQAEALV (204 aa)) are precorrin-2 dehydrogenase /sirohydrochlorin ferrochelatase. NAD(+) contacts are provided by residues 22–23 (HI) and 43–44 (EK). Ser128 is subject to Phosphoserine. The tract at residues 216–486 (GEVSLVGAGP…NKETHWKQAA (271 aa)) is uroporphyrinogen-III C-methyltransferase. Pro225 is an S-adenosyl-L-methionine binding site. Asp248 acts as the Proton acceptor in catalysis. Lys270 serves as the catalytic Proton donor. S-adenosyl-L-methionine contacts are provided by residues 301-303 (GGD), Val306, 331-332 (TA), Met383, and Gly412.

In the N-terminal section; belongs to the precorrin-2 dehydrogenase / sirohydrochlorin ferrochelatase family. It in the C-terminal section; belongs to the precorrin methyltransferase family.

It catalyses the reaction uroporphyrinogen III + 2 S-adenosyl-L-methionine = precorrin-2 + 2 S-adenosyl-L-homocysteine + H(+). The enzyme catalyses precorrin-2 + NAD(+) = sirohydrochlorin + NADH + 2 H(+). It carries out the reaction siroheme + 2 H(+) = sirohydrochlorin + Fe(2+). It functions in the pathway cofactor biosynthesis; adenosylcobalamin biosynthesis; precorrin-2 from uroporphyrinogen III: step 1/1. The protein operates within cofactor biosynthesis; adenosylcobalamin biosynthesis; sirohydrochlorin from precorrin-2: step 1/1. Its pathway is porphyrin-containing compound metabolism; siroheme biosynthesis; precorrin-2 from uroporphyrinogen III: step 1/1. It participates in porphyrin-containing compound metabolism; siroheme biosynthesis; siroheme from sirohydrochlorin: step 1/1. It functions in the pathway porphyrin-containing compound metabolism; siroheme biosynthesis; sirohydrochlorin from precorrin-2: step 1/1. Its function is as follows. Multifunctional enzyme that catalyzes the SAM-dependent methylations of uroporphyrinogen III at position C-2 and C-7 to form precorrin-2 via precorrin-1. Then it catalyzes the NAD-dependent ring dehydrogenation of precorrin-2 to yield sirohydrochlorin. Finally, it catalyzes the ferrochelation of sirohydrochlorin to yield siroheme. In Actinobacillus pleuropneumoniae serotype 3 (strain JL03), this protein is Siroheme synthase.